The following is a 291-amino-acid chain: 4-diphosphocytidyl-2-C-methyl-D-erythritol kinase (291 aa).

Lys-12 is an active-site residue. 95–105 (PDGGGLGGGSS) lines the ATP pocket. The active site involves Asp-137.

The protein belongs to the GHMP kinase family. IspE subfamily.

The catalysed reaction is 4-CDP-2-C-methyl-D-erythritol + ATP = 4-CDP-2-C-methyl-D-erythritol 2-phosphate + ADP + H(+). It functions in the pathway isoprenoid biosynthesis; isopentenyl diphosphate biosynthesis via DXP pathway; isopentenyl diphosphate from 1-deoxy-D-xylulose 5-phosphate: step 3/6. Its function is as follows. Catalyzes the phosphorylation of the position 2 hydroxy group of 4-diphosphocytidyl-2C-methyl-D-erythritol. The sequence is that of 4-diphosphocytidyl-2-C-methyl-D-erythritol kinase from Alkalilimnicola ehrlichii (strain ATCC BAA-1101 / DSM 17681 / MLHE-1).